A 300-amino-acid chain; its full sequence is MIKTSWEGNCFLNFFNNKVSLGNVDKTIFKSKSTSPYKLLKSTHDQEGRCILPVLHTAGGLVGGDLLVFEVNLEKNSKVLLTTSSAQKVYGSVGISKINPKGSFSKQKNLINILDNSHLEYLPQETIIFANGLYEQIFKVSISETSSFLFTDLIRLGRSSSGESIESGVFRSRLEIIRNNDLLDDWEYVDQIELSKASFVAKSGMDYMPVFGSLIWICEKDFSKSKINNLVRKIKKIFNKTNNNLSIGILENGISVRFLGSSSQDARKCFFRIWKQIRSVSGFCEPKYQGVWPLQDSMNY.

Belongs to the UreD family. As to quaternary structure, ureD, UreF and UreG form a complex that acts as a GTP-hydrolysis-dependent molecular chaperone, activating the urease apoprotein by helping to assemble the nickel containing metallocenter of UreC. The UreE protein probably delivers the nickel.

Its subcellular location is the cytoplasm. In terms of biological role, required for maturation of urease via the functional incorporation of the urease nickel metallocenter. The polypeptide is Urease accessory protein UreD (Prochlorococcus marinus (strain AS9601)).